A 187-amino-acid chain; its full sequence is MRLRLLVSAGMLLVALSPCLPCRALLSRGSVSGAPRAPQPLNFLQPEQPQQPQPILIRMGEEYFLRLGNLNRSPAARLSPNSTPLTAGRGSRPSHDQAAANFFRVLLQQLQMPQRPLDSSTELAERGAEDALGGHQGALERERRSEEPPISLDLTFHLLREVLEMARAEQLAQQAHSNRKLMEIIGK.

The N-terminal stretch at 1-24 (MRLRLLVSAGMLLVALSPCLPCRA) is a signal peptide. The propeptide occupies 25–144 (LLSRGSVSGA…HQGALERERR (120 aa)). A disordered region spans residues 75–95 (AARLSPNSTPLTAGRGSRPSH). I185 carries the isoleucine amide modification.

Belongs to the sauvagine/corticotropin-releasing factor/urotensin I family. As to quaternary structure, interacts (via C-terminus) with CRFR1 (via N-terminal extracellular domain). As to expression, produced by the hypothalamus.

The protein localises to the secreted. Its function is as follows. Hormone regulating the release of corticotropin from pituitary gland. Induces NLRP6 in intestinal epithelial cells, hence may influence gut microbiota profile. This chain is Corticoliberin (Crh), found in Rattus norvegicus (Rat).